The chain runs to 124 residues: Small ribosomal subunit protein uS12 (124 aa).

Residues 1–28 (MPTIQQLIRSERSKAKKKTKSPALKQCP) form a disordered region. Residue Asp89 is modified to 3-methylthioaspartic acid. Residues 101–124 (TLDAQGVKDRKQGRSKYGTKKPKE) form a disordered region. Basic residues predominate over residues 113 to 124 (GRSKYGTKKPKE).

Belongs to the universal ribosomal protein uS12 family. In terms of assembly, part of the 30S ribosomal subunit. Contacts proteins S8 and S17. May interact with IF1 in the 30S initiation complex.

In terms of biological role, with S4 and S5 plays an important role in translational accuracy. Functionally, interacts with and stabilizes bases of the 16S rRNA that are involved in tRNA selection in the A site and with the mRNA backbone. Located at the interface of the 30S and 50S subunits, it traverses the body of the 30S subunit contacting proteins on the other side and probably holding the rRNA structure together. The combined cluster of proteins S8, S12 and S17 appears to hold together the shoulder and platform of the 30S subunit. The sequence is that of Small ribosomal subunit protein uS12 from Crocosphaera subtropica (strain ATCC 51142 / BH68) (Cyanothece sp. (strain ATCC 51142)).